Here is a 388-residue protein sequence, read N- to C-terminus: Succinate--CoA ligase [ADP-forming] subunit beta (388 aa).

Residues 9–236 (KKLFAEHGVP…VAAVDPLEQK (228 aa)) form the ATP-grasp domain. ATP contacts are provided by residues K45, 52-54 (GRG), E91, S94, and E99. Residues N191 and D205 each coordinate Mg(2+). Residues N256 and 318 to 320 (GIT) each bind substrate.

Belongs to the succinate/malate CoA ligase beta subunit family. Heterotetramer of two alpha and two beta subunits. It depends on Mg(2+) as a cofactor.

It carries out the reaction succinate + ATP + CoA = succinyl-CoA + ADP + phosphate. The catalysed reaction is GTP + succinate + CoA = succinyl-CoA + GDP + phosphate. The protein operates within carbohydrate metabolism; tricarboxylic acid cycle; succinate from succinyl-CoA (ligase route): step 1/1. In terms of biological role, succinyl-CoA synthetase functions in the citric acid cycle (TCA), coupling the hydrolysis of succinyl-CoA to the synthesis of either ATP or GTP and thus represents the only step of substrate-level phosphorylation in the TCA. The beta subunit provides nucleotide specificity of the enzyme and binds the substrate succinate, while the binding sites for coenzyme A and phosphate are found in the alpha subunit. This chain is Succinate--CoA ligase [ADP-forming] subunit beta, found in Frankia casuarinae (strain DSM 45818 / CECT 9043 / HFP020203 / CcI3).